Consider the following 120-residue polypeptide: Ribosome-binding factor A (120 aa).

The protein belongs to the RbfA family. As to quaternary structure, monomer. Binds 30S ribosomal subunits, but not 50S ribosomal subunits or 70S ribosomes.

The protein localises to the cytoplasm. Functionally, one of several proteins that assist in the late maturation steps of the functional core of the 30S ribosomal subunit. Associates with free 30S ribosomal subunits (but not with 30S subunits that are part of 70S ribosomes or polysomes). Required for efficient processing of 16S rRNA. May interact with the 5'-terminal helix region of 16S rRNA. The polypeptide is Ribosome-binding factor A (Campylobacter jejuni subsp. jejuni serotype O:6 (strain 81116 / NCTC 11828)).